A 115-amino-acid polypeptide reads, in one-letter code: Large ribosomal subunit protein uL22 (115 aa).

This sequence belongs to the universal ribosomal protein uL22 family. In terms of assembly, part of the 50S ribosomal subunit.

In terms of biological role, this protein binds specifically to 23S rRNA; its binding is stimulated by other ribosomal proteins, e.g. L4, L17, and L20. It is important during the early stages of 50S assembly. It makes multiple contacts with different domains of the 23S rRNA in the assembled 50S subunit and ribosome. Its function is as follows. The globular domain of the protein is located near the polypeptide exit tunnel on the outside of the subunit, while an extended beta-hairpin is found that lines the wall of the exit tunnel in the center of the 70S ribosome. The polypeptide is Large ribosomal subunit protein uL22 (Endomicrobium trichonymphae).